The sequence spans 875 residues: Leucine--tRNA ligase (875 aa).

Positions 43 to 53 match the 'HIGH' region motif; it reads PYPSGRIHIGH. A 'KMSKS' region motif is present at residues 631–635; the sequence is KMSKS. Residue Lys634 coordinates ATP.

The protein belongs to the class-I aminoacyl-tRNA synthetase family.

The protein localises to the cytoplasm. The enzyme catalyses tRNA(Leu) + L-leucine + ATP = L-leucyl-tRNA(Leu) + AMP + diphosphate. This Mesorhizobium japonicum (strain LMG 29417 / CECT 9101 / MAFF 303099) (Mesorhizobium loti (strain MAFF 303099)) protein is Leucine--tRNA ligase.